The chain runs to 114 residues: MENAFKSHLQFTEKAIKKIKNLIEIEKNHDLKLRIYINGGGCSGFQYQFIFDTSINEDDIIITQSEVSLIIDPISLQYLYGGQIDYLENLEGSKFIVYNPNAKNTCGCGSSFSI.

Residues Cys42, Cys106, and Cys108 each coordinate iron-sulfur cluster.

It belongs to the HesB/IscA family. Homodimer. Iron-sulfur cluster is required as a cofactor.

Functionally, required for insertion of 4Fe-4S clusters for at least IspG. In Buchnera aphidicola subsp. Acyrthosiphon pisum (strain APS) (Acyrthosiphon pisum symbiotic bacterium), this protein is Iron-sulfur cluster insertion protein ErpA.